The primary structure comprises 236 residues: Rab-like protein 3 (236 aa).

Residues 1-236 (MASLDRVKVL…AGTLKSLHYD (236 aa)) are small GTPase-like. Residues 16–21 (GVGKSS), 148–150 (KLD), and 179–180 (DC) each bind GTP.

It belongs to the small GTPase superfamily. Rab family. Homodimer. Interacts with GPR89; the interaction stabilizes GPR89. Interacts with RAP1GDS1.

Functionally, required for KRAS signaling regulation and modulation of cell proliferation. Regulator of KRAS prenylation, and probably prenylation of other small GTPases. Required for lymphocyte development and function. Not required for myeloid cell development. The protein is Rab-like protein 3 (RABL3) of Homo sapiens (Human).